The chain runs to 712 residues: MTAPTVPADQHGHPLPGPADPAANDTWRPSRYREPLHPDNEEVLEQAAYQAAVTRSSGDDRKRKIKPRRTVDYQGGVQKWRMLNKLKGVHEFRPAIHPNPSDIVNFLPPVALRSNPSTSICDYWVHTSINKERSPTRVVRWTPDARRLLTGNDKGQFTLWNGASFNYESITQVHDDSIRSFTYSHNGQALVSADKGGTIKYFTPHLTNIHGFQGHREACHDVSWSPNDERFVTCGDDGLVKIWSYREAKEERSLSGHGWDVRCVDWHPTKGLIVSGSKDMLVKFWDPRTGKDLSTLHSSKSTINTCRWSPDGHLVATAGQDSVIRLFDIRTFRELEVLKGHEKEVNCIEWHPIHHSLLVSGDALGTINYFSLLSPTPSTPITTLSAAHEDAVFSLSFHPLGHILCSGSKDFTARFWCRARPPGGQEFDKWHLTEEGAAQKELERITKREWGTNAPPANAAGGGGGGGGDKQQVALPGLSNLVAAVNSVKTGPTTTGGGPSGLPGLGAPNVHAGTPPSRVSTPSSMGPPGPGAQGQAQGGQFPRGRSALPSQNDMLRHNHGSRGGFADRDRNGGGDRGGMDRDRDSRGGRQDPRGNQMYGRGPGGPPPGPPPGQGGYNYPPAPPNYPPYPPSSYPPPPNNQPGYPPAPNYAMPPGPGAPPQSYPYNRPPQGPPQNNNPGGQGNYGASASGGYGQYGGGGGGGGGGGYGRDGRR.

The segment at 1–37 is disordered; it reads MTAPTVPADQHGHPLPGPADPAANDTWRPSRYREPLH. 7 WD repeats span residues 131 to 170, 173 to 213, 214 to 253, 256 to 295, 298 to 337, 340 to 380, and 387 to 426; these read KERSPTRVVRWTPDARRLLTGNDKGQFTLWNGASFNYESI, VHDD…HGFQ, GHREACHDVSWSPNDERFVTCGDDGLVKIWSYREAKEERS, GHGWDVRCVDWHPTKGLIVSGSKDMLVKFWDPRTGKDLST, SSKSTINTCRWSPDGHLVATAGQDSVIRLFDIRTFRELEV, GHEK…PSTP, and AHEDAVFSLSFHPLGHILCSGSKDFTARFWCRARPPGGQE. Disordered regions lie at residues 446 to 473 and 489 to 712; these read TKREWGTNAPPANAAGGGGGGGGDKQQV and KTGP…DGRR. Composition is skewed to gly residues over residues 460–469 and 494–504; these read AGGGGGGGGD and TTGGGPSGLPG. The span at 533-545 shows a compositional bias: low complexity; sequence QGQAQGGQFPRGR. The segment covering 565–592 has biased composition (basic and acidic residues); the sequence is FADRDRNGGGDRGGMDRDRDSRGGRQDP. Composition is skewed to pro residues over residues 603-612 and 619-671; these read GGPPPGPPPG and PPAP…PQGP. Residues 678-712 are compositionally biased toward gly residues; sequence GGQGNYGASASGGYGQYGGGGGGGGGGGYGRDGRR.

It is found in the nucleus. Its function is as follows. Required for 3'-end cleavage and polyadenylation of pre-mRNAs. Also involved in chromosome segregation where it has a role in chromosome attachment to the mitotic spindle. The chain is Polyadenylation factor subunit 2 (PFS2) from Cryptococcus neoformans var. neoformans serotype D (strain JEC21 / ATCC MYA-565) (Filobasidiella neoformans).